Consider the following 541-residue polypeptide: Membrane protein insertase YidC (541 aa).

The helical transmembrane segment at 7-27 threads the bilayer; sequence ILLLALALVSFLLFQQWQVET. Residues 34-55 show a composition bias toward polar residues; sequence TVSTVQQTHKNGDVPTSSTANS. The interval 34–59 is disordered; that stretch reads TVSTVQQTHKNGDVPTSSTANSDAPV. Transmembrane regions (helical) follow at residues 343–363, 418–438, 456–476, and 495–515; these read SFIQ…TFIV, LGGC…YWAL, LSAQ…MFLI, and FIPV…VLYW.

The protein belongs to the OXA1/ALB3/YidC family. Type 1 subfamily. Interacts with the Sec translocase complex via SecD. Specifically interacts with transmembrane segments of nascent integral membrane proteins during membrane integration.

It localises to the cell inner membrane. Required for the insertion and/or proper folding and/or complex formation of integral membrane proteins into the membrane. Involved in integration of membrane proteins that insert both dependently and independently of the Sec translocase complex, as well as at least some lipoproteins. Aids folding of multispanning membrane proteins. The sequence is that of Membrane protein insertase YidC from Aliivibrio salmonicida (strain LFI1238) (Vibrio salmonicida (strain LFI1238)).